Reading from the N-terminus, the 508-residue chain is Photosystem II CP47 reaction center protein (508 aa).

Transmembrane regions (helical) follow at residues 21-36, 101-115, 140-156, 203-218, 237-252, and 457-472; these read AVHL…WAGS, IILS…IWHW, GIHL…FGAF, IAAG…FHLS, VLSS…AFVV, and IFAL…HGAR.

This sequence belongs to the PsbB/PsbC family. PsbB subfamily. In terms of assembly, PSII is composed of 1 copy each of membrane proteins PsbA, PsbB, PsbC, PsbD, PsbE, PsbF, PsbH, PsbI, PsbJ, PsbK, PsbL, PsbM, PsbT, PsbY, PsbZ, Psb30/Ycf12, at least 3 peripheral proteins of the oxygen-evolving complex and a large number of cofactors. It forms dimeric complexes. Requires Binds multiple chlorophylls. PSII binds additional chlorophylls, carotenoids and specific lipids. as cofactor.

The protein localises to the plastid. The protein resides in the chloroplast thylakoid membrane. Its function is as follows. One of the components of the core complex of photosystem II (PSII). It binds chlorophyll and helps catalyze the primary light-induced photochemical processes of PSII. PSII is a light-driven water:plastoquinone oxidoreductase, using light energy to abstract electrons from H(2)O, generating O(2) and a proton gradient subsequently used for ATP formation. This is Photosystem II CP47 reaction center protein from Bigelowiella natans (Pedinomonas minutissima).